The chain runs to 195 residues: 3-isopropylmalate dehydratase small subunit (195 aa).

It belongs to the LeuD family. LeuD type 1 subfamily. In terms of assembly, heterodimer of LeuC and LeuD.

It catalyses the reaction (2R,3S)-3-isopropylmalate = (2S)-2-isopropylmalate. It functions in the pathway amino-acid biosynthesis; L-leucine biosynthesis; L-leucine from 3-methyl-2-oxobutanoate: step 2/4. Catalyzes the isomerization between 2-isopropylmalate and 3-isopropylmalate, via the formation of 2-isopropylmaleate. The chain is 3-isopropylmalate dehydratase small subunit from Karelsulcia muelleri (strain GWSS) (Sulcia muelleri).